The following is a 152-amino-acid chain: SsrA-binding protein (152 aa).

This sequence belongs to the SmpB family.

It localises to the cytoplasm. Functionally, required for rescue of stalled ribosomes mediated by trans-translation. Binds to transfer-messenger RNA (tmRNA), required for stable association of tmRNA with ribosomes. tmRNA and SmpB together mimic tRNA shape, replacing the anticodon stem-loop with SmpB. tmRNA is encoded by the ssrA gene; the 2 termini fold to resemble tRNA(Ala) and it encodes a 'tag peptide', a short internal open reading frame. During trans-translation Ala-aminoacylated tmRNA acts like a tRNA, entering the A-site of stalled ribosomes, displacing the stalled mRNA. The ribosome then switches to translate the ORF on the tmRNA; the nascent peptide is terminated with the 'tag peptide' encoded by the tmRNA and targeted for degradation. The ribosome is freed to recommence translation, which seems to be the essential function of trans-translation. The polypeptide is SsrA-binding protein (Helicobacter pylori (strain Shi470)).